Here is an 864-residue protein sequence, read N- to C-terminus: Coiled-coil and C2 domain-containing protein 1B (864 aa).

Positions 82–154 (QDCMTDMTGE…VNSSVAEIQH (73 aa)) are disordered. Composition is skewed to acidic residues over residues 89–104 (TGED…EELL) and 111–129 (VGEE…EESE). Residues 91–118 (EDDDDDLEEDEELLAELQDVVGEEEEVE) adopt a coiled-coil conformation. Positions 142 to 154 (EQQVNSSVAEIQH) are enriched in polar residues. A coiled-coil region spans residues 162-209 (GMLQVLEERIGNYKEAISNAKLSNESAKARRYERGLKTLESMLSAARQ). A disordered region spans residues 218 to 249 (IPPPVACGKPAVSPTTDVPTTDTSKQGLGDLN). A compositionally biased stretch (low complexity) spans 229 to 241 (VSPTTDVPTTDTS). A coiled-coil region spans residues 385–412 (VGSLLQALQQRMEKYKSAAQQAKSSGDD). 2 disordered regions span residues 441 to 463 (AELP…EEGS) and 478 to 502 (AGED…PTQL). The span at 444–453 (PVPPGFPPLP) shows a compositional bias: pro residues. Coiled-coil stretches lie at residues 464–488 (VEKA…DEDE) and 535–564 (PAVQ…KNDL). One can recognise a C2 domain in the interval 685 to 820 (HFEDKTLKIV…ETQCEIREIV (136 aa)).

Belongs to the CC2D1 family.

The sequence is that of Coiled-coil and C2 domain-containing protein 1B (cc2d1b) from Xenopus laevis (African clawed frog).